The primary structure comprises 66 residues: Large ribosomal subunit protein bL35 (66 aa).

Composition is skewed to basic residues over residues Met1–Lys15 and Thr28–Arg45. The disordered stretch occupies residues Met1–Gln49.

The protein belongs to the bacterial ribosomal protein bL35 family.

This Anaplasma marginale (strain Florida) protein is Large ribosomal subunit protein bL35.